A 1867-amino-acid chain; its full sequence is TATA-binding protein-associated factor MOT1 (1867 aa).

S93 carries the phosphoserine modification. Residues 169-228 are disordered; that stretch reads KTDDIKQETSMLNASDKANENKSNANKKSARMLAMARRKKKMSAKNTPKHPVDITESSVS. The span at 181-203 shows a compositional bias: low complexity; that stretch reads NASDKANENKSNANKKSARMLAM. A Nuclear localization signal motif is present at residues 195–211; sequence KKSARMLAMARRKKKMS. HEAT repeat units lie at residues 289–326, 445–482, and 541–578; these read WQFQ…KHAY, GLLE…EFVK, and WSFK…IKDD. At S677 the chain carries Phosphoserine. HEAT repeat units follow at residues 1108 to 1145 and 1188 to 1225; these read SEVF…ISSV and PYVI…LVPL. A Helicase ATP-binding domain is found at 1284-1457; the sequence is AFLNKYHLHG…WSLFDFLMPG (174 aa). 1297 to 1304 contributes to the ATP binding site; that stretch reads DDMGLGKT. The DEGH box motif lies at 1408–1411; the sequence is DEGH. Residues 1495–1537 form an HEAT 6 repeat; that stretch reads ALHKQVLPFMLRRLKEDVLSDLPPKIIQDYYCELGDLQKQLYM. Positions 1639 to 1787 constitute a Helicase C-terminal domain; it reads PIQNVISQHR…STVVNQQNSG (149 aa). A disordered region spans residues 1802–1822; it reads PDNVTSQDNEEKNNGDSQAAK.

It belongs to the SNF2/RAD54 helicase family. Forms a complex with TBP which binds TATA DNA with high affinity but with altered specificity.

It localises to the mitochondrion. Its subcellular location is the nucleus. Functionally, regulates transcription in association with TATA binding protein (TBP). Removes TBP from the TATA box via its C-terminal ATPase activity. Both transcription activation and repression require its ATPase activity. The sequence is that of TATA-binding protein-associated factor MOT1 (MOT1) from Saccharomyces cerevisiae (strain ATCC 204508 / S288c) (Baker's yeast).